We begin with the raw amino-acid sequence, 128 residues long: Small ribosomal subunit protein uS12 (128 aa).

Asp89 carries the 3-methylthioaspartic acid modification.

This sequence belongs to the universal ribosomal protein uS12 family. As to quaternary structure, part of the 30S ribosomal subunit. Contacts proteins S8 and S17. May interact with IF1 in the 30S initiation complex.

With S4 and S5 plays an important role in translational accuracy. In terms of biological role, interacts with and stabilizes bases of the 16S rRNA that are involved in tRNA selection in the A site and with the mRNA backbone. Located at the interface of the 30S and 50S subunits, it traverses the body of the 30S subunit contacting proteins on the other side and probably holding the rRNA structure together. The combined cluster of proteins S8, S12 and S17 appears to hold together the shoulder and platform of the 30S subunit. The protein is Small ribosomal subunit protein uS12 of Campylobacter jejuni subsp. doylei (strain ATCC BAA-1458 / RM4099 / 269.97).